Consider the following 263-residue polypeptide: Putative hydro-lyase Psyc_1103 (263 aa).

The protein belongs to the D-glutamate cyclase family.

This is Putative hydro-lyase Psyc_1103 from Psychrobacter arcticus (strain DSM 17307 / VKM B-2377 / 273-4).